A 2136-amino-acid polypeptide reads, in one-letter code: U5 small nuclear ribonucleoprotein 200 kDa helicase (2136 aa).

S17 and S26 each carry phosphoserine. K46 participates in a covalent cross-link: Glycyl lysine isopeptide (Lys-Gly) (interchain with G-Cter in SUMO2). Residues 50–80 are disordered; that stretch reads TRMGDKAQRTKPQMQEERRAKRRKRDEDRHD. Residues 54-84 adopt a coiled-coil conformation; it reads DKAQRTKPQMQEERRAKRRKRDEDRHDINKM. S225 bears the Phosphoserine mark. Residue T389 is modified to Phosphothreonine. The interval 395-2129 is interaction with C9orf78 and WBP4; that stretch reads DLDQGGEALA…YKFSVDVKEA (1735 aa). The region spanning 490-673 is the Helicase ATP-binding 1 domain; that stretch reads RAALETDENL…FLRVDPAKGL (184 aa). ATP is bound at residue 503 to 510; the sequence is APTGAGKT. Positions 615–618 match the DEIH box motif; that stretch reads DEIH. The region spanning 684–921 is the Helicase C-terminal 1 domain; that stretch reads PLEQTYVGIT…NAKDAVNWLG (238 aa). Y709 carries the phosphotyrosine modification. K971 carries the N6-acetyllysine modification. The 306-residue stretch at 981-1286 folds into the SEC63 1 domain; that stretch reads VTELGRIASH…SCETQLPVSF (306 aa). The segment at 1282-2136 is interaction with TSSC4; it reads LPVSFRHLIL…KEAETDSDSD (855 aa). Positions 1337–1512 constitute a Helicase ATP-binding 2 domain; it reads NTVYNSDDNV…WLGCSATSTF (176 aa). 1350-1357 lines the ATP pocket; it reads APTGSGKT. Phosphothreonine is present on T1428. The DEVH box motif lies at 1454 to 1457; the sequence is DEVH. The Helicase C-terminal 2 domain maps to 1545-1753; it reads PVYHAITKHS…TIENKQDAVD (209 aa). T1765 carries the phosphothreonine modification. In terms of domain architecture, SEC63 2 spans 1812–2124; it reads PLNLGMIAAY…GCDQEYKFSV (313 aa). S2002 is modified (phosphoserine). T2131 is modified (phosphothreonine). Phosphoserine is present on residues S2133 and S2135.

It belongs to the helicase family. SKI2 subfamily. As to quaternary structure, component of a core complex containing at least PRPF8, SNRNP200, EFTUD2 and SNRNP40. Component of the U5 snRNP and U4/U6-U5 tri-snRNP complexes, building blocks of the spliceosome. Component of the U4/U6-U5 tri-snRNP complex composed of the U4, U6 and U5 snRNAs and at least PRPF3, PRPF4, PRPF6, PRPF8, PRPF31, SNRNP200, TXNL4A, SNRNP40, DDX23, CD2BP2, PPIH, SNU13, EFTUD2, SART1 and USP39. Component of precatalytic, catalytic and postcatalytic spliceosomal complexes. Component of the minor spliceosome, which splices U12-type introns. Interacts with C9orf78; the interaction is direct and mutually exclusive with its interaction with WBP4. Interacts with WBP4; the interaction is mutually exclusive with its interaction with C9orf78. Interacts with PRPF8. Interacts with TSSC4; the interaction is direct, excludes recruitment of C9ORF78 and WBP4 to SNRNP200 and negatively regulates its RNA helicase activity. Widely expressed.

It localises to the nucleus. The enzyme catalyses ATP + H2O = ADP + phosphate + H(+). In terms of biological role, catalyzes the ATP-dependent unwinding of U4/U6 RNA duplices, an essential step in the assembly of a catalytically active spliceosome. Plays a role in pre-mRNA splicing as a core component of precatalytic, catalytic and postcatalytic spliceosomal complexes. As a component of the minor spliceosome, involved in the splicing of U12-type introns in pre-mRNAs. Involved in spliceosome assembly, activation and disassembly. Mediates changes in the dynamic network of RNA-RNA interactions in the spliceosome. The polypeptide is U5 small nuclear ribonucleoprotein 200 kDa helicase (SNRNP200) (Homo sapiens (Human)).